The chain runs to 110 residues: MTSVVIVVSVAVLLGVLVITDSSWPCVFNSTAKWSLQHIESVTLERPRWSRVKKPSSSKWRHLRTILQWWQERRKQAHLLDTWQKQAMDMDECLTRYRDAKHDDICVISE.

The N-terminal stretch at 1-22 is a signal peptide; that stretch reads MTSVVIVVSVAVLLGVLVITDS. N-linked (GlcNAc...) asparagine glycosylation is present at N29. The RxLR-dEER signature appears at 61 to 74; that stretch reads RHLRTILQWWQERR.

Belongs to the RxLR effector family.

The protein resides in the secreted. The protein localises to the host nucleus. Its subcellular location is the host cytoplasm. In terms of biological role, secreted effector that completely suppresses the host cell death induced by cell death-inducing proteins. The sequence is that of Secreted RxLR effector protein 89 from Plasmopara viticola (Downy mildew of grapevine).